Consider the following 787-residue polypeptide: Pyridoxal-dependent decarboxylase domain-containing protein 1 (787 aa).

A compositionally biased stretch (basic and acidic residues) spans 26 to 44 (MLEKSPRRTEEENGKKPVS). A disordered region spans residues 26 to 52 (MLEKSPRRTEEENGKKPVSEDIPGPLQ). S652 carries the phosphoserine modification. Residues 682 to 787 (QGTGVTPPPT…SQVEELERLR (106 aa)) are disordered. Phosphothreonine is present on residues T687 and T691. Residues S710, S718, S722, and S748 each carry the phosphoserine modification. The segment covering 725–748 (HIEDLEKVEQLSSGLEHDNLEAHS) has biased composition (basic and acidic residues). Over residues 759 to 771 (TARQTEALQNQAQ) the composition is skewed to polar residues. The segment covering 772–787 (HQEDDHSQVEELERLR) has biased composition (basic and acidic residues). S778 bears the Phosphoserine mark.

The protein belongs to the group II decarboxylase family. Pyridoxal 5'-phosphate is required as a cofactor.

The chain is Pyridoxal-dependent decarboxylase domain-containing protein 1 (Pdxdc1) from Mus musculus (Mouse).